The primary structure comprises 359 residues: MKKYLALALIAPLLISCSTTQKGDTYNEAWVKDTNGFDILMGQFAHNIENIWGFKEVVIAGPKDYVKYTDQYQTRSHINFDDGTITIETIAGTEPAAHLRRAIIKTLLMGDDPSSVDLYSDVDDITISKEPFLYGQVVDNTGQPIRWEGRASNFADYLLKNRLKSRSNGLRIIYSVTINMVPNHLDKRAHKYLGMVRQASRKYGVDESLILAIMQTESSFNPYAVSRSDALGLMQVVQHTAGKDVFRSQGKSGTPSRSFLFDPASNIDTGTAYLAMLNNVYLGGIDNPTSRRYAVITAYNGGAGSVLRVFSNDKIQAANIINTMTPGDVYQTLTTRHPSAESRRYLYKVNTAQKSYRRR.

A signal peptide spans 1-16 (MKKYLALALIAPLLIS). Cysteine 17 carries N-palmitoyl cysteine lipidation. The S-diacylglycerol cysteine moiety is linked to residue cysteine 17.

It belongs to the transglycosylase Slt family.

Its subcellular location is the cell outer membrane. It catalyses the reaction Exolytic cleavage of the (1-&gt;4)-beta-glycosidic linkage between N-acetylmuramic acid (MurNAc) and N-acetylglucosamine (GlcNAc) residues in peptidoglycan, from either the reducing or the non-reducing ends of the peptidoglycan chains, with concomitant formation of a 1,6-anhydrobond in the MurNAc residue.. Murein-degrading enzyme. May play a role in recycling of muropeptides during cell elongation and/or cell division. The sequence is that of Membrane-bound lytic murein transglycosylase C from Shigella dysenteriae serotype 1 (strain Sd197).